The chain runs to 1865 residues: Transient receptor potential cation channel subfamily M member 7 (1865 aa).

M1 is modified (N-acetylmethionine). Topologically, residues 1-850 are cytoplasmic; the sequence is MSQKSWIEST…ITRKFYAFYH (850 aa). Position 101 is a phosphoserine (S101). Low complexity predominate over residues 544-555; it reads NRRSGRNTSSST. A disordered region spans residues 544 to 575; sequence NRRSGRNTSSSTPQLRKSHESFGNRADKKEKM. Residues 560–573 show a composition bias toward basic and acidic residues; that stretch reads KSHESFGNRADKKE. Residues 851 to 876 traverse the membrane as a helical segment; that stretch reads APIVKFWFNTLAYLGFLMLYTFVVLV. Residues 877–882 lie on the Extracellular side of the membrane; it reads QMEQLP. The chain crosses the membrane as a helical span at residues 883 to 904; the sequence is SVQEWIVIAYIFTYAIEKVREI. Topologically, residues 905–923 are cytoplasmic; that stretch reads FMSEAGKVNQKIKVWFSDY. A helical transmembrane segment spans residues 924–943; it reads FNISDTIAIISFFIGFGLRF. Topologically, residues 944–956 are extracellular; sequence GAKWNFANAYDNH. The helical transmembrane segment at 957–980 threads the bilayer; sequence VFVAGRLIYCLNIIFWYVRLLDFL. The Cytoplasmic portion of the chain corresponds to 981–999; it reads AVNQQAGPYVMMIGKMVAN. Residues 1000 to 1023 traverse the membrane as a helical segment; that stretch reads MFYIVVIMALVLLSFGVPRKAILY. The Extracellular portion of the chain corresponds to 1024-1025; that stretch reads PH. Residues 1026–1066 constitute an intramembrane region (pore-forming); the sequence is EAPSWTLAKDIVFHPYWMIFGEVYAYEIDVCANDSVIPQIC. Residues 1067 to 1069 lie on the Extracellular side of the membrane; the sequence is GPG. The helical transmembrane segment at 1070–1098 threads the bilayer; it reads TWLTPFLQAVYLFVQYIIMVNLLIAFFNN. Residues 1099 to 1865 are Cytoplasmic-facing; it reads VYLQVKAISN…ESTNSVRLML (767 aa). S-palmitoyl cysteine attachment occurs at residues C1143, C1144, and C1146. Position 1163 is a phosphothreonine; by autocatalysis (T1163). A phosphoserine; by autocatalysis mark is found at S1191 and S1193. Residues 1198–1250 adopt a coiled-coil conformation; the sequence is RVTFERVEQMCIQIKEVGDRVNYIKRSLQSLDSQIGHLQDLSALTVDTLKTLT. S1224 is subject to Phosphoserine. A phosphoserine; by autocatalysis mark is found at S1255 and S1258. T1265 bears the Phosphothreonine; by autocatalysis mark. At S1287 the chain carries Phosphoserine; by autocatalysis. At S1301 the chain carries Phosphoserine. Phosphoserine; by autocatalysis is present on S1358. A phosphoserine mark is found at S1361 and S1386. A compositionally biased stretch (low complexity) spans 1386–1398; it reads SSSTSIPHLSSPP. The disordered stretch occupies residues 1386–1407; it reads SSSTSIPHLSSPPTKFFVSTPS. 2 positions are modified to phosphoserine; by autocatalysis: S1387 and S1390. Phosphoserine occurs at positions 1395 and 1396. S1404 bears the Phosphoserine; by autocatalysis mark. T1405 is subject to Phosphothreonine; by autocatalysis. S1407 bears the Phosphoserine; by autocatalysis mark. Residue T1435 is modified to Phosphothreonine; by autocatalysis. Position 1446 is a phosphoserine; by autocatalysis (S1446). At T1455 the chain carries Phosphothreonine; by autocatalysis. S1456 and S1463 each carry phosphoserine; by autocatalysis. T1467 bears the Phosphothreonine mark. S1468 is modified (phosphoserine; by autocatalysis). T1471 bears the Phosphothreonine; by autocatalysis mark. S1476 and S1477 each carry phosphoserine; by autocatalysis. The residue at position 1482 (T1482) is a Phosphothreonine; by autocatalysis. The disordered stretch occupies residues 1492 to 1511; it reads HSKQAEKISRRPSTEDTHEV. Residue S1493 is modified to Phosphoserine; by autocatalysis. Over residues 1494–1511 the composition is skewed to basic and acidic residues; it reads KQAEKISRRPSTEDTHEV. S1500 is subject to Phosphoserine. S1504 is subject to Phosphoserine; by autocatalysis. T1508 is subject to Phosphothreonine; by autocatalysis. Phosphoserine; by autocatalysis is present on residues S1513, S1527, and S1533. The segment at 1524 to 1543 is disordered; that stretch reads DRPSNREMPSEEGTLNGLTS. Phosphothreonine; by autocatalysis is present on residues T1537 and T1542. S1543 carries the post-translational modification Phosphoserine; by autocatalysis. The residue at position 1551 (T1551) is a Phosphothreonine; by autocatalysis. Phosphoserine; by autocatalysis is present on residues S1567 and S1569. The residue at position 1583 (T1583) is a Phosphothreonine; by autocatalysis. Residues 1594-1824 form the Alpha-type protein kinase domain; sequence ILNNSMSSWS…CCRKLKLPDL (231 aa). Residues S1598 and S1615 each carry the phosphoserine; by autocatalysis modification. ADP-binding residues include G1621, G1622, L1623, R1624, and K1648. Phosphoserine; by autocatalysis is present on S1660. T1685 is subject to Phosphothreonine; by autocatalysis. The ADP site is built by E1720, E1721, and M1723. H1753 provides a ligand contact to Zn(2+). Catalysis depends on D1767, which acts as the Proton acceptor. D1777 is an ADP binding site. Phosphoserine; by autocatalysis is present on S1779. Zn(2+)-binding residues include H1810, C1812, and C1816. The residue at position 1830 (T1830) is a Phosphothreonine; by autocatalysis. Positions 1836-1865 are disordered; the sequence is FPQDEPSDLNLQPGNSTKESESTNSVRLML. The span at 1844–1865 shows a compositional bias: polar residues; it reads LNLQPGNSTKESESTNSVRLML. Residue S1851 is modified to Phosphoserine. S1860 is subject to Phosphoserine; by autocatalysis.

The protein in the C-terminal section; belongs to the protein kinase superfamily. Alpha-type protein kinase family. ALPK subfamily. It in the N-terminal section; belongs to the transient receptor (TC 1.A.4) family. LTrpC subfamily. TRPM7 sub-subfamily. In terms of assembly, homotetramer. Interacts with PLCB1. Forms heteromers with TRPM6; heteromeric channels are functionally different from the homomeric channels. Requires Zn(2+) as cofactor. In terms of processing, palmitoylated; palmitoylation at Cys-1143, Cys-1144 and Cys-1146 promotes TRPM7 trafficking from the Golgi to the surface membrane. Autophosphorylated; autophosphorylation of C-terminus regulates TRPM7 kinase activity towards its substrates. Post-translationally, the C-terminal kinase domain can be cleaved from the channel segment in a cell-type-specific fashion. TRPM7 is cleaved by caspase-8, dissociating the kinase from the ion-conducting pore. The cleaved kinase fragments (M7CKs) can translocate to the cell nucleus and binds chromatin-remodeling complex proteins in a Zn(2+)-dependent manner to ultimately phosphorylate specific Ser/Thr residues of histones.

It is found in the cell membrane. The protein resides in the cytoplasmic vesicle membrane. It localises to the nucleus. The enzyme catalyses L-seryl-[protein] + ATP = O-phospho-L-seryl-[protein] + ADP + H(+). It catalyses the reaction L-threonyl-[protein] + ATP = O-phospho-L-threonyl-[protein] + ADP + H(+). The catalysed reaction is Mg(2+)(in) = Mg(2+)(out). It carries out the reaction Ca(2+)(in) = Ca(2+)(out). The enzyme catalyses Zn(2+)(in) = Zn(2+)(out). Its activity is regulated as follows. Channel displays constitutive activity. Channel activity is negatively regulated by cytosolic Mg(2+) and Mg-ATP. Channel activity is negatively regulated by low intracellular pH. Resting free cytosolic Mg(2+) and Mg-ATP concentrations seem to be sufficient to block native TRPM7 channel activity. TRPM7 channel activity is highly dependent on membrane levels of phosphatidylinositol 4,5 bisphosphate (PIP2). PIP2 hydrolysis negatively regulates TRPM7 channel activity. TRPM7 kinase activity does not affect channel activity. The kinase activity is controlled through the autophosphorylation of a serine/threonine-rich region located N-terminal to the catalytic domain. Its function is as follows. Bifunctional protein that combines an ion channel with an intrinsic kinase domain, enabling it to modulate cellular functions either by conducting ions through the pore or by phosphorylating downstream proteins via its kinase domain. The channel is highly permeable to divalent cations, specifically calcium (Ca2+), magnesium (Mg2+) and zinc (Zn2+) and mediates their influx. Controls a wide range of biological processes such as Ca2(+), Mg(2+) and Zn(2+) homeostasis, vesicular Zn(2+) release channel and intracellular Ca(2+) signaling, embryonic development, immune responses, cell motility, proliferation and differentiation. The C-terminal alpha-kinase domain autophosphorylates cytoplasmic residues of TRPM7. In vivo, TRPM7 phosphorylates SMAD2, suggesting that TRPM7 kinase may play a role in activating SMAD signaling pathways. In vitro, TRPM7 kinase phosphorylates ANXA1 (annexin A1), myosin II isoforms and a variety of proteins with diverse cellular functions. Functionally, the cleaved channel exhibits substantially higher current and potentiates Fas receptor signaling. The C-terminal kinase domain can be cleaved from the channel segment in a cell-type-specific fashion. In immune cells, the TRPM7 kinase domain is clipped from the channel domain by caspases in response to Fas-receptor stimulation. The cleaved kinase fragments can translocate to the nucleus, and bind chromatin-remodeling complex proteins in a Zn(2+)-dependent manner to ultimately phosphorylate specific Ser/Thr residues of histones known to be functionally important for cell differentiation and embryonic development. The protein is Transient receptor potential cation channel subfamily M member 7 (TRPM7) of Homo sapiens (Human).